A 153-amino-acid chain; its full sequence is MGLTSQLLPPLFFLLACAGNFAHGHNCHIALREIIETLNSLTEQKTLCTKLTITDILAASKNTTEKETFCRAATVLRQFYSHHEKDTRCLGATAQQFHRHKQLIRFLKRLDRNLWGLAGLNSCPVKEASQSTLEDFLERLKTIMKEKYSKCRR.

An N-terminal signal peptide occupies residues 1 to 24 (MGLTSQLLPPLFFLLACAGNFAHG). 3 disulfide bridges follow: Cys-27-Cys-151, Cys-48-Cys-89, and Cys-70-Cys-123. Residue Asn-62 is glycosylated (N-linked (GlcNAc...) asparagine).

The protein belongs to the IL-4/IL-13 family.

It is found in the secreted. Its function is as follows. Participates in at least several B-cell activation processes as well as of other cell types. It is a costimulator of DNA-synthesis. It induces the expression of class II MHC molecules on resting B-cells. It enhances both secretion and cell surface expression of IgE and IgG1. It also regulates the expression of the low affinity Fc receptor for IgE (CD23) on both lymphocytes and monocytes. Positively regulates IL31RA expression in macrophages. Stimulates autophagy in dendritic cells by interfering with mTORC1 signaling and through the induction of RUFY4. The chain is Interleukin-4 (IL4) from Papio anubis (Olive baboon).